The sequence spans 277 residues: Probable endonuclease 4 (277 aa).

Zn(2+) contacts are provided by histidine 67, histidine 107, glutamate 141, aspartate 173, histidine 176, histidine 210, aspartate 223, histidine 225, and glutamate 255.

This sequence belongs to the AP endonuclease 2 family. The cofactor is Zn(2+).

It catalyses the reaction Endonucleolytic cleavage to 5'-phosphooligonucleotide end-products.. In terms of biological role, endonuclease IV plays a role in DNA repair. It cleaves phosphodiester bonds at apurinic or apyrimidinic (AP) sites, generating a 3'-hydroxyl group and a 5'-terminal sugar phosphate. This Haloarcula marismortui (strain ATCC 43049 / DSM 3752 / JCM 8966 / VKM B-1809) (Halobacterium marismortui) protein is Probable endonuclease 4.